Reading from the N-terminus, the 135-residue chain is Antennal-specific protein OS-C (135 aa).

A signal peptide spans 1 to 27; the sequence is MGFHMGRQLLLSGFLLVMLQMVTQTQA. The interval 43-84 is disordered; it reads VIKREGDDDGDDDDSSSEETVEDSEESRRRRREVNTDNTPSA. Over residues 49–67 the composition is skewed to acidic residues; it reads DDDGDDDDSSSEETVEDSE.

In terms of tissue distribution, antenna. In the third antennal segment. Expressed in sencilla coeloconica.

This is Antennal-specific protein OS-C (Os-C) from Drosophila melanogaster (Fruit fly).